A 562-amino-acid polypeptide reads, in one-letter code: Long-chain-fatty-acid--CoA ligase (562 aa).

The protein belongs to the ATP-dependent AMP-binding enzyme family. The cofactor is Mg(2+).

Its subcellular location is the membrane. It carries out the reaction a long-chain fatty acid + ATP + CoA = a long-chain fatty acyl-CoA + AMP + diphosphate. It participates in lipid metabolism; fatty acid beta-oxidation. Its function is as follows. Catalyzes the esterification, concomitant with transport, of exogenous long-chain fatty acids into metabolically active CoA thioesters for subsequent degradation or incorporation into phospholipids. In Haemophilus influenzae (strain ATCC 51907 / DSM 11121 / KW20 / Rd), this protein is Long-chain-fatty-acid--CoA ligase (fadD).